A 334-amino-acid chain; its full sequence is Glycerol-3-phosphate dehydrogenase [NAD(P)+] (334 aa).

NADPH contacts are provided by Tyr14 and Lys108. Residues Lys108, Gly140, and Ser142 each coordinate sn-glycerol 3-phosphate. Ala144 is an NADPH binding site. Positions 195, 248, 258, 259, and 260 each coordinate sn-glycerol 3-phosphate. The active-site Proton acceptor is the Lys195. Residue Arg259 coordinates NADPH. Position 285 (Glu285) interacts with NADPH.

It belongs to the NAD-dependent glycerol-3-phosphate dehydrogenase family.

The protein resides in the cytoplasm. It catalyses the reaction sn-glycerol 3-phosphate + NAD(+) = dihydroxyacetone phosphate + NADH + H(+). It carries out the reaction sn-glycerol 3-phosphate + NADP(+) = dihydroxyacetone phosphate + NADPH + H(+). It participates in membrane lipid metabolism; glycerophospholipid metabolism. Catalyzes the reduction of the glycolytic intermediate dihydroxyacetone phosphate (DHAP) to sn-glycerol 3-phosphate (G3P), the key precursor for phospholipid synthesis. The sequence is that of Glycerol-3-phosphate dehydrogenase [NAD(P)+] from Mesoplasma florum (strain ATCC 33453 / NBRC 100688 / NCTC 11704 / L1) (Acholeplasma florum).